A 333-amino-acid polypeptide reads, in one-letter code: D-alanine--D-alanine ligase (333 aa).

The ATP-grasp domain maps to 124–329 (KMWFSALGIR…FAQYLSGNIM (206 aa)). 154-209 (ALEKWGSIFIKAASQGSSVGCYRVDNKEQLANSLEEAFKYSPYVVVEKTINARELE) contributes to the ATP binding site. Mg(2+) contacts are provided by aspartate 283, glutamate 296, and asparagine 298.

This sequence belongs to the D-alanine--D-alanine ligase family. Mg(2+) serves as cofactor. The cofactor is Mn(2+).

The protein resides in the cytoplasm. It carries out the reaction 2 D-alanine + ATP = D-alanyl-D-alanine + ADP + phosphate + H(+). It participates in cell wall biogenesis; peptidoglycan biosynthesis. Functionally, cell wall formation. The chain is D-alanine--D-alanine ligase from Shewanella halifaxensis (strain HAW-EB4).